The chain runs to 384 residues: Spermidine/putrescine import ATP-binding protein PotA (384 aa).

The ABC transporter domain maps to 26-260 (ISLEKVSKTY…PATRFVAGFI (235 aa)). ATP is bound at residue 62 to 69 (GPSGCGKT).

This sequence belongs to the ABC transporter superfamily. Spermidine/putrescine importer (TC 3.A.1.11.1) family. In terms of assembly, the complex is composed of two ATP-binding proteins (PotA), two transmembrane proteins (PotB and PotC) and a solute-binding protein (PotD).

It is found in the cell membrane. It catalyses the reaction ATP + H2O + polyamine-[polyamine-binding protein]Side 1 = ADP + phosphate + polyamineSide 2 + [polyamine-binding protein]Side 1.. Part of the ABC transporter complex PotABCD involved in spermidine/putrescine import. Responsible for energy coupling to the transport system. The chain is Spermidine/putrescine import ATP-binding protein PotA from Thermobifida fusca (strain YX).